Consider the following 139-residue polypeptide: Large ribosomal subunit protein eL34 (139 aa).

The interval 113–139 (VSKPPKIAKAPAAAAAAKPAKTATKSK) is disordered.

The protein belongs to the eukaryotic ribosomal protein eL34 family.

The chain is Large ribosomal subunit protein eL34 (RpL34) from Ochlerotatus triseriatus (Eastern treehole mosquito).